The sequence spans 147 residues: Large ribosomal subunit protein bL9 (147 aa).

The protein belongs to the bacterial ribosomal protein bL9 family.

Binds to the 23S rRNA. The protein is Large ribosomal subunit protein bL9 of Campylobacter jejuni subsp. doylei (strain ATCC BAA-1458 / RM4099 / 269.97).